Here is a 456-residue protein sequence, read N- to C-terminus: UPF0210 protein Dde_3704 (456 aa).

It belongs to the UPF0210 family. Homodimer.

This Oleidesulfovibrio alaskensis (strain ATCC BAA-1058 / DSM 17464 / G20) (Desulfovibrio alaskensis) protein is UPF0210 protein Dde_3704.